Consider the following 141-residue polypeptide: Hemoglobin subunit alpha-D (141 aa).

The Globin domain maps to M1–R141. 2 residues coordinate heme b: H58 and H87.

Belongs to the globin family. Heterotetramer of two alpha-D chains and two beta chains. In terms of tissue distribution, red blood cells.

Its function is as follows. Involved in oxygen transport from the lung to the various peripheral tissues. This Coturnix japonica (Japanese quail) protein is Hemoglobin subunit alpha-D (HBAD).